A 421-amino-acid polypeptide reads, in one-letter code: MVPTVSLEPTGHSCWDEPLSIAVRGLAPEQPVTLRTALRDEKGALFRAHARYRADSHGELDLARTPALGGSFSGLEPMGLLWAMEPDRPFWRLIKRDVQTPFVVELEVLDGHEPDGGRLLARAVHERHFMAPGVRRVPVREGRVRATLFLPPGTGPFPGIIDLFGVGGGLLEYRASLLAGKGFAVMALAYYKYDDLPKVIDILHLEYFEEAVTYLLSHPQVKGPGVGLLGISKGAELSLSMASFLKGITAAVVINGATVNVISTLYYKEESLPGLGMHLERIKVTKDGFKDIIDILNVPLEAPDQKSLIPLERSDTAFLFLVGQDDHNWKSEFYAREASKRLQAHGKEKPQIVCYPKTGHHIEPPYIPWSIAAPHSYFDKPILLGGEPRAHAMAQVDAWQRLQTFFHKHLSGDKRPSPAKL.

Residues Ser232, Asp326, and His360 each act as charge relay system in the active site. Positions 419-421 (AKL) match the Microbody targeting signal motif.

Belongs to the C/M/P thioester hydrolase family. Highly expressed in spleen, brain, testis and proximal and distal intestine; expressed at low level in the liver.

It is found in the peroxisome. It catalyses the reaction hexadecanoyl-CoA + H2O = hexadecanoate + CoA + H(+). The catalysed reaction is decanoyl-CoA + H2O = decanoate + CoA + H(+). The enzyme catalyses octanoyl-CoA + H2O = octanoate + CoA + H(+). It carries out the reaction dodecanoyl-CoA + H2O = dodecanoate + CoA + H(+). It catalyses the reaction tetradecanoyl-CoA + H2O = tetradecanoate + CoA + H(+). The catalysed reaction is octadecanoyl-CoA + H2O = octadecanoate + CoA + H(+). The enzyme catalyses eicosanoyl-CoA + H2O = eicosanoate + CoA + H(+). It carries out the reaction (9Z)-octadecenoyl-CoA + H2O = (9Z)-octadecenoate + CoA + H(+). It catalyses the reaction (9Z,12Z)-octadecadienoyl-CoA + H2O = (9Z,12Z)-octadecadienoate + CoA + H(+). The catalysed reaction is (5Z,8Z,11Z,14Z)-eicosatetraenoyl-CoA + H2O = (5Z,8Z,11Z,14Z)-eicosatetraenoate + CoA + H(+). The enzyme catalyses (9Z)-hexadecenoyl-CoA + H2O = (9Z)-hexadecenoate + CoA + H(+). Its pathway is lipid metabolism; fatty acid metabolism. Functionally, catalyzes the hydrolysis of acyl-CoAs into free fatty acids and coenzyme A (CoASH), regulating their respective intracellular levels. Mainly active on medium-chain acyl-CoAs. Seems to be involved in intraperoxisomal regulation of acyl-CoA levels, but not CoASH levels. May have a function in termination of beta-oxidation of fatty acids. The protein is Acyl-coenzyme A thioesterase 5 (Acot5) of Mus musculus (Mouse).